The primary structure comprises 622 residues: Cilia- and flagella-associated protein 206 (622 aa).

Residues 568 to 593 are disordered; sequence NTSQVYPLKEASTQSKREGSSRVPRP.

Belongs to the CFAP206 family. As to expression, expressed in the sperm, oviduct, lung, nasal cavity, brain ependyma and choroid plexus.

The protein localises to the cytoplasm. It is found in the cytoskeleton. The protein resides in the cilium axoneme. It localises to the cilium basal body. Essential for sperm motility and is involved in the regulation of the beating frequency of motile cilia on the epithelial cells of the respiratory tract. Required for the establishment of radial spokes in sperm flagella. The sequence is that of Cilia- and flagella-associated protein 206 from Mus musculus (Mouse).